The following is a 249-amino-acid chain: CDP-diacylglycerol pyrophosphatase (249 aa).

A helical transmembrane segment spans residues 5–25 (GYFLLAVIVIVAAAGVGYWKF).

The protein belongs to the Cdh family.

It is found in the cell inner membrane. The enzyme catalyses a CDP-1,2-diacyl-sn-glycerol + H2O = a 1,2-diacyl-sn-glycero-3-phosphate + CMP + 2 H(+). The protein operates within phospholipid metabolism; CDP-diacylglycerol degradation; phosphatidate from CDP-diacylglycerol: step 1/1. The sequence is that of CDP-diacylglycerol pyrophosphatase from Salmonella arizonae (strain ATCC BAA-731 / CDC346-86 / RSK2980).